The primary structure comprises 183 residues: Glutamyl-tRNA(Gln) amidotransferase subunit F, mitochondrial (183 aa).

The transit peptide at 1–23 (MSRMLNQIPRLITRSFRTSSVGY) directs the protein to the mitochondrion.

It belongs to the GatF family. As to quaternary structure, subunit of the heterotrimeric GatFAB amidotransferase (AdT) complex, composed of A, B and F subunits.

The protein resides in the mitochondrion inner membrane. The catalysed reaction is L-glutamyl-tRNA(Gln) + L-glutamine + ATP + H2O = L-glutaminyl-tRNA(Gln) + L-glutamate + ADP + phosphate + H(+). Allows the formation of correctly charged Gln-tRNA(Gln) through the transamidation of misacylated Glu-tRNA(Gln) in the mitochondria. The reaction takes place in the presence of glutamine and ATP through an activated gamma-phospho-Glu-tRNA(Gln). Required for proper protein synthesis within the mitochondrion. This chain is Glutamyl-tRNA(Gln) amidotransferase subunit F, mitochondrial, found in Debaryomyces hansenii (strain ATCC 36239 / CBS 767 / BCRC 21394 / JCM 1990 / NBRC 0083 / IGC 2968) (Yeast).